The sequence spans 614 residues: Probable NOT transcription complex subunit VIP2 (614 aa).

Disordered regions lie at residues M1–G46, N58–R89, and N361–P391. Positions A364–T381 are enriched in polar residues.

Belongs to the CNOT2/3/5 family. As to quaternary structure, interacts with Agrobacterium tumefaciens VirE2. Binds to VIP1. Forms a complex made of Agrobacterium VirE2, VIP1, VIP2 and single-stranded DNA (ssDNA).

Its subcellular location is the nucleus. Functionally, transcriptional regulator required for Agrobacterium-mediated stable genetic transformation by T-DNA integration in host genome, but not for T-DNA transient expression. This chain is Probable NOT transcription complex subunit VIP2 (VIP2), found in Arabidopsis thaliana (Mouse-ear cress).